The primary structure comprises 37 residues: Hemextin A (37 aa).

As to quaternary structure, heterotetramer composed of two A and two B chains; non-covalently linked. Does not exist as a complex in the crude venom. May contain several disulfide bonds. Expressed by the venom gland.

It is found in the secreted. Functionally, hemextin A (monomer): exhibits mild anticoagulant activity. It specifically inhibits the activation of FX (F10) by the TF-FVIIa complex (extrinsic tenase complex (ETC)) by non-competitively inhibiting the enzymatic activity of FVIIa. Its function is as follows. Hemextin AB complex: specifically inhibits the activation of FX (F10) by the TF-FVIIa complex (extrinsic tenase complex (ETC)) (IC(50)= 100 nM, Ki=25 nM) by non-competitively inhibiting the enzymatic activity of FVIIa. This chain is Hemextin A, found in Hemachatus haemachatus (Rinkhals).